A 178-amino-acid chain; its full sequence is Large ribosomal subunit protein uL6 (178 aa).

This sequence belongs to the universal ribosomal protein uL6 family. As to quaternary structure, part of the 50S ribosomal subunit.

In terms of biological role, this protein binds to the 23S rRNA, and is important in its secondary structure. It is located near the subunit interface in the base of the L7/L12 stalk, and near the tRNA binding site of the peptidyltransferase center. This chain is Large ribosomal subunit protein uL6, found in Streptococcus pyogenes serotype M3 (strain ATCC BAA-595 / MGAS315).